Consider the following 655-residue polypeptide: Polycyclic ketone monooxygenase (655 aa).

FAD-binding residues include G89, D113, A114, T121, W124, C132, D133, Y139, and V183. Positions 277, 280, 301, 425, and 452 each coordinate NADPH. A disulfide bond links C424 and C596. 2 residues coordinate FAD: T492 and N541. Residue Y600 participates in NADPH binding.

It belongs to the FAD-binding monooxygenase family. Requires FAD as cofactor.

Polycyclic ketone monooxygenase (PockeMO) that displays excellent enantioselectivity, acts on various ketones, and is particularly active on polycyclic molecules. Breaks C-C bonds through the insertion of a single oxygen atom adjacent to a carbonyl moiety, yielding esters or lactones from ketones. PockeMO is able to convert linear ketones (including cyclohexane and to a lesser extend 4-octanone), cyclic ketones (including cyclohexanone and cyclooctanone), bicyclic ketones and polycyclic ketones (steroids). Performs oxidation of the keto functionalities at both the A and D rings of steroids. Particularly, oxidizes the A ring of stanolone or pregnenolone. Selectively oxidizes the D ring of androstenedione or androstadienedione, steroids with keto groups in both the A and D rings, to yield the pharmaceutically relevant testo(lo)lactone. In Thermothelomyces thermophilus (strain ATCC 42464 / BCRC 31852 / DSM 1799) (Sporotrichum thermophile), this protein is Polycyclic ketone monooxygenase.